Consider the following 509-residue polypeptide: Bifunctional purine biosynthesis protein PurH (509 aa).

The MGS-like domain maps to 1-144 (MKRALISVSD…KNYAAVTVVV (144 aa)).

Belongs to the PurH family.

The catalysed reaction is (6R)-10-formyltetrahydrofolate + 5-amino-1-(5-phospho-beta-D-ribosyl)imidazole-4-carboxamide = 5-formamido-1-(5-phospho-D-ribosyl)imidazole-4-carboxamide + (6S)-5,6,7,8-tetrahydrofolate. It catalyses the reaction IMP + H2O = 5-formamido-1-(5-phospho-D-ribosyl)imidazole-4-carboxamide. The protein operates within purine metabolism; IMP biosynthesis via de novo pathway; 5-formamido-1-(5-phospho-D-ribosyl)imidazole-4-carboxamide from 5-amino-1-(5-phospho-D-ribosyl)imidazole-4-carboxamide (10-formyl THF route): step 1/1. Its pathway is purine metabolism; IMP biosynthesis via de novo pathway; IMP from 5-formamido-1-(5-phospho-D-ribosyl)imidazole-4-carboxamide: step 1/1. This Listeria welshimeri serovar 6b (strain ATCC 35897 / DSM 20650 / CCUG 15529 / CIP 8149 / NCTC 11857 / SLCC 5334 / V8) protein is Bifunctional purine biosynthesis protein PurH.